A 525-amino-acid chain; its full sequence is Pre-mRNA-processing factor 19 homolog 2 (525 aa).

Residues 1–70 (MNCAISGEVP…PKTLHTASIP (70 aa)) enclose the U-box domain. WD repeat units lie at residues 220–261 (TNKP…STLT), 262–301 (GHSK…NYAC), 307–346 (DHSA…CLAQ), 351–390 (SKNV…NVAK), 393–431 (GHTG…NFKS), 433–469 (LSAD…AEWN), and 478–517 (SGTG…KANV). The DWD box signature appears at 409-424 (FLATAAEDGVRLWDLR).

Belongs to the WD repeat PRP19 family. As to quaternary structure, homotetramer. Component of the multiprotein assembly MOS4-associated complex (MAC) at least composed of MOS4, CDC5, PRL1 and PRP19 which is related to the PRP19C/Prp19 complex/NTC/Nineteen complex identified in other organisms. Associated with the spliceosome.

The protein resides in the nucleus. It catalyses the reaction S-ubiquitinyl-[E2 ubiquitin-conjugating enzyme]-L-cysteine + [acceptor protein]-L-lysine = [E2 ubiquitin-conjugating enzyme]-L-cysteine + N(6)-ubiquitinyl-[acceptor protein]-L-lysine.. The protein operates within protein modification; protein ubiquitination. Functionally, probable ubiquitin-protein ligase which is mainly involved pre-mRNA splicing and DNA repair. Component of the MAC complex that probably regulates defense responses through transcriptional control and thereby is essential for plant innate immunity. This chain is Pre-mRNA-processing factor 19 homolog 2 (PRP19B), found in Arabidopsis thaliana (Mouse-ear cress).